The chain runs to 418 residues: UDP-N-acetylglucosamine 1-carboxyvinyltransferase (418 aa).

Position 23–24 (23–24 (KN)) interacts with phosphoenolpyruvate. Position 93 (arginine 93) interacts with UDP-N-acetyl-alpha-D-glucosamine. The active-site Proton donor is the aspartate 117. UDP-N-acetyl-alpha-D-glucosamine contacts are provided by aspartate 305 and valine 327.

Belongs to the EPSP synthase family. MurA subfamily.

Its subcellular location is the cytoplasm. It carries out the reaction phosphoenolpyruvate + UDP-N-acetyl-alpha-D-glucosamine = UDP-N-acetyl-3-O-(1-carboxyvinyl)-alpha-D-glucosamine + phosphate. The protein operates within cell wall biogenesis; peptidoglycan biosynthesis. Cell wall formation. Adds enolpyruvyl to UDP-N-acetylglucosamine. This is UDP-N-acetylglucosamine 1-carboxyvinyltransferase from Mycobacterium bovis (strain ATCC BAA-935 / AF2122/97).